A 350-amino-acid chain; its full sequence is MAGGDREKALDAALANIEKQFGKGSVMRLGDEVRAPLEIIPSGSIALDVALGLGGFPRGRVVEIYGPESSGKTTVALHAVANAQRAGGIVAFIDAEHALDPDYAKNLGVDTDALLVSQPDSGEQALEIADMLIRSGALDLIVIDSVAALVPRAEIEGEMGDSHVGLQARLMSQALRKMTGALNNSKTTMIFINQLREKIGVMFGSPETTTGGKALKFYASVRLDVRRIETLKDGTDMVGNRTRVKVVKNKVAPPFKQAEFDIMYGKGISREGGLIDVGVEAGLVRKAGAWYTYEGDQLGQGKENARAFLRDNPDLANELEKKILEKLGVGPTVDQDVAELPAEPIGVGDF.

66–73 (GPESSGKT) serves as a coordination point for ATP.

It belongs to the RecA family.

It is found in the cytoplasm. Can catalyze the hydrolysis of ATP in the presence of single-stranded DNA, the ATP-dependent uptake of single-stranded DNA by duplex DNA, and the ATP-dependent hybridization of homologous single-stranded DNAs. It interacts with LexA causing its activation and leading to its autocatalytic cleavage. This is Protein RecA from Nocardioides sp. (strain ATCC BAA-499 / JS614).